Here is a 268-residue protein sequence, read N- to C-terminus: Embryonic abundant protein VF30.1 (268 aa).

An N-terminal signal peptide occupies residues 1-25 (MEFAHLTVLSLFCLAFVGITATSSG). Residues 68-259 (LFFEHDLHPG…GNKAAAWVPN (192 aa)) enclose the BURP domain. Asn259 carries an N-linked (GlcNAc...) asparagine glycan.

In terms of tissue distribution, seed.

The protein resides in the secreted. This Vicia faba (Broad bean) protein is Embryonic abundant protein VF30.1.